Reading from the N-terminus, the 197-residue chain is Protein FAM219B (197 aa).

Disordered stretches follow at residues 1–77 and 117–142; these read MATE…HRDH and DENL…YSSA. A phosphoserine mark is found at S14, S125, and S127.

This sequence belongs to the FAM219 family.

The protein is Protein FAM219B (Fam219b) of Mus musculus (Mouse).